The primary structure comprises 408 residues: Substance-P receptor (408 aa).

The Extracellular segment spans residues 1–32; that stretch reads MNSNISAQNDSALNSTIQNGTKINQFIQPPWQ. 4 N-linked (GlcNAc...) asparagine glycosylation sites follow: N4, N9, N14, and N19. A helical transmembrane segment spans residues 33 to 55; the sequence is IALWSVAYSIIVIVSLVGNIIVM. The Cytoplasmic portion of the chain corresponds to 56 to 65; sequence WIIIAHKRMR. The chain crosses the membrane as a helical span at residues 66–87; the sequence is TVTNYFLVNLAFAEASMSAFNT. Residues 88-107 lie on the Extracellular side of the membrane; it reads VINFTYAIHNHWYYGLIYCK. C106 and C181 are disulfide-bonded. A helical transmembrane segment spans residues 108-129; it reads FHNFFPISAVFTSIYSMTAIAL. Topologically, residues 130–149 are cytoplasmic; it reads DRYMAIIHPLKPRLSATATK. A helical transmembrane segment spans residues 150–170; that stretch reads IVICVIWSFSFCMAFPLGYYA. The Extracellular segment spans residues 171–196; the sequence is DVYPMEGGDICYLNWPDSEENRKYEQ. The chain crosses the membrane as a helical span at residues 197–221; sequence VYQVLVFCLIYILPLLVIGCAYTFI. Over 222–250 the chain is Cytoplasmic; that stretch reads GMTLWASEIPGDSSDRYHEQVVAKRKVVK. Residues 251-272 traverse the membrane as a helical segment; the sequence is MMIVVVCTFAICWLPFHIFFLL. Residues 273–283 are Extracellular-facing; that stretch reads QTLHEMTQKFY. A helical membrane pass occupies residues 284–308; that stretch reads QQFYLAIMWLAMSSTMYNPIIYCCL. At 309–408 the chain is on the cytoplasmic side; sequence NDRFRIGFKH…SSSFYSNNLA (100 aa). C323 carries S-palmitoyl cysteine lipidation. Residues 366–408 form a disordered region; sequence DEEAEENGKSSKRLSLDLTSNGSSRSVCKTMSDSSSFYSNNLA. Positions 382–408 are enriched in polar residues; the sequence is DLTSNGSSRSVCKTMSDSSSFYSNNLA.

The protein belongs to the G-protein coupled receptor 1 family.

The protein localises to the cell membrane. Functionally, this is a receptor for the tachykinin neuropeptide substance P. It is probably associated with G proteins that activate a phosphatidylinositol-calcium second messenger system. The sequence is that of Substance-P receptor (TACR1) from Aquarana catesbeiana (American bullfrog).